Consider the following 237-residue polypeptide: Protein-S-isoprenylcysteine O-methyltransferase (237 aa).

4 helical membrane-spanning segments follow: residues 26-46, 53-73, 92-112, and 116-136; these read SSAISCGLGIGIGFGIALFIF, FGIYLAGLCTFHMWEYIWVTM, FNMALLISFIEFWIEWYFFPS, and FSLWWVGAICMVFGQIVRSVA. Residues Gln-149, 156-159, Tyr-164, and 169-172 contribute to the S-adenosyl-L-methionine site; these read HVLV and HPSY. A helical membrane pass occupies residues 184–204; it reads VILMNPISIIGFGWASWSFFS. Arg-206 contacts substrate. Glu-210 contributes to the S-adenosyl-L-methionine binding site.

It belongs to the class VI-like SAM-binding methyltransferase superfamily. Isoprenylcysteine carboxyl methyltransferase family.

It localises to the endoplasmic reticulum membrane. The catalysed reaction is [protein]-C-terminal S-[(2E,6E)-farnesyl]-L-cysteine + S-adenosyl-L-methionine = [protein]-C-terminal S-[(2E,6E)-farnesyl]-L-cysteine methyl ester + S-adenosyl-L-homocysteine. Functionally, methylates the C-terminal cysteine residues of small GTPases and the heterotrimeric G protein gamma subunit in response to cAMP. The methylation is required for intercellular signaling and regulation of cAMP waves propagation. It also seems to induce the activity of car1, a G protein-coupled receptor which senses extracellular cAMP during the aggregation phase of development. In Dictyostelium discoideum (Social amoeba), this protein is Protein-S-isoprenylcysteine O-methyltransferase (icmt-1).